A 299-amino-acid chain; its full sequence is Oxygen-dependent coproporphyrinogen-III oxidase (299 aa).

Residue Ser-92 coordinates substrate. A divalent metal cation is bound by residues His-96 and His-106. Residue His-106 is the Proton donor of the active site. 108–110 is a substrate binding site; sequence NVR. A divalent metal cation-binding residues include His-145 and His-175. The interval 240 to 275 is important for dimerization; sequence YVEFNLVWDRGTLFGLQTGGRTESILMSMPPLVRWE. A substrate-binding site is contributed by 258 to 260; that stretch reads GGR.

This sequence belongs to the aerobic coproporphyrinogen-III oxidase family. As to quaternary structure, homodimer. Requires a divalent metal cation as cofactor.

The protein resides in the cytoplasm. The catalysed reaction is coproporphyrinogen III + O2 + 2 H(+) = protoporphyrinogen IX + 2 CO2 + 2 H2O. It functions in the pathway porphyrin-containing compound metabolism; protoporphyrin-IX biosynthesis; protoporphyrinogen-IX from coproporphyrinogen-III (O2 route): step 1/1. In terms of biological role, involved in the heme biosynthesis. Catalyzes the aerobic oxidative decarboxylation of propionate groups of rings A and B of coproporphyrinogen-III to yield the vinyl groups in protoporphyrinogen-IX. The sequence is that of Oxygen-dependent coproporphyrinogen-III oxidase from Salmonella arizonae (strain ATCC BAA-731 / CDC346-86 / RSK2980).